Here is a 423-residue protein sequence, read N- to C-terminus: Anhydromevalonate phosphate decarboxylase (423 aa).

Mn(2+) is bound by residues asparagine 134 and glutamate 197. The active-site Proton acceptor is the aspartate 245.

This sequence belongs to the UbiD family. The cofactor is prenylated FMN. Mn(2+) is required as a cofactor.

It carries out the reaction (2E)-3-methyl-5-phosphooxypent-2-enoate + H(+) = isopentenyl phosphate + CO2. It participates in isoprenoid biosynthesis; isopentenyl diphosphate biosynthesis via mevalonate pathway. Functionally, catalyzes the conversion of trans-anhydromevalonate 5-phosphate (tAHMP) into isopentenyl phosphate. Involved in the archaeal mevalonate (MVA) pathway, which provides fundamental precursors for isoprenoid biosynthesis, such as isopentenyl diphosphate (IPP) and dimethylallyl diphosphate (DMAPP). This Methanothermobacter thermautotrophicus (strain ATCC 29096 / DSM 1053 / JCM 10044 / NBRC 100330 / Delta H) (Methanobacterium thermoautotrophicum) protein is Anhydromevalonate phosphate decarboxylase.